A 182-amino-acid chain; its full sequence is MASIMMNKSVVLSKECAKPLASPKVTLNKRGFATTIATKNRGMMVWQPFNNKMFETFSFLPPLTDEQISKQVDYILINSWTPCLEFAASDQAYAGNENCIRMGPVASTYQDNRYWTMWKLPMFGCTDASQVLSEIQACTKAFPDAYIRLVCFDANRQVQISGFLVHRPPSATDYKLPADRQV.

The transit peptide at 1-41 (MASIMMNKSVVLSKECAKPLASPKVTLNKRGFATTIATKNR) directs the protein to the chloroplast.

The protein belongs to the RuBisCO small chain family. In terms of assembly, heterohexadecamer of 8 large and 8 small subunits.

Its subcellular location is the plastid. The protein resides in the chloroplast. Functionally, ruBisCO catalyzes two reactions: the carboxylation of D-ribulose 1,5-bisphosphate, the primary event in carbon dioxide fixation, as well as the oxidative fragmentation of the pentose substrate. Both reactions occur simultaneously and in competition at the same active site. Although the small subunit is not catalytic it is essential for maximal activity. This chain is Ribulose bisphosphate carboxylase small subunit, chloroplastic 3, found in Acetabularia acetabulum (Mermaid's wine glass).